A 941-amino-acid polypeptide reads, in one-letter code: Isoleucine--tRNA ligase (941 aa).

The 'HIGH' region signature appears at 58-68; it reads PYANGNIHIGH. E564 provides a ligand contact to L-isoleucyl-5'-AMP. Positions 605–609 match the 'KMSKS' region motif; that stretch reads KMSKS. An ATP-binding site is contributed by K608. 4 residues coordinate Zn(2+): C904, C907, C924, and C927.

This sequence belongs to the class-I aminoacyl-tRNA synthetase family. IleS type 1 subfamily. In terms of assembly, monomer. The cofactor is Zn(2+).

Its subcellular location is the cytoplasm. It carries out the reaction tRNA(Ile) + L-isoleucine + ATP = L-isoleucyl-tRNA(Ile) + AMP + diphosphate. Catalyzes the attachment of isoleucine to tRNA(Ile). As IleRS can inadvertently accommodate and process structurally similar amino acids such as valine, to avoid such errors it has two additional distinct tRNA(Ile)-dependent editing activities. One activity is designated as 'pretransfer' editing and involves the hydrolysis of activated Val-AMP. The other activity is designated 'posttransfer' editing and involves deacylation of mischarged Val-tRNA(Ile). The sequence is that of Isoleucine--tRNA ligase from Buchnera aphidicola subsp. Cinara cedri (strain Cc).